A 130-amino-acid polypeptide reads, in one-letter code: UPF0225 protein DR_0483 (130 aa).

Belongs to the UPF0225 family.

The chain is UPF0225 protein DR_0483 from Deinococcus radiodurans (strain ATCC 13939 / DSM 20539 / JCM 16871 / CCUG 27074 / LMG 4051 / NBRC 15346 / NCIMB 9279 / VKM B-1422 / R1).